A 555-amino-acid chain; its full sequence is Putative ankyrin repeat protein L283 (555 aa).

ANK repeat units lie at residues T364 to I389, V390 to E420, I422 to C447, and G455 to K488.

This Acanthamoeba polyphaga mimivirus (APMV) protein is Putative ankyrin repeat protein L283.